The sequence spans 299 residues: Protein LacX, chromosomal (299 aa).

This Lactococcus lactis subsp. lactis (Streptococcus lactis) protein is Protein LacX, chromosomal (lacX).